Reading from the N-terminus, the 144-residue chain is Necrosis-inducing secreted protein 1 (144 aa).

The signal sequence occupies residues 1-19 (MQFRASIAAAAGLFALANA). Asn88, Asn126, and Asn133 each carry an N-linked (GlcNAc...) asparagine glycan. Residues 103–132 (QYVVAAGLYSLYGASSSPTLSHYNVTVTVG) form a BAK1/SERK3-binding region.

Belongs to the NIS1 effector family.

It localises to the secreted. It is found in the host cytoplasm. Secreted effector that induces necrotic lesions in Nicotiana benthamiana. Interacts with the host receptor-like kinases (RLKs) BAK1/SERK3 and BKK1/SERK4, inhibits their kinase activity and suppresses INF1-induced pathogen-associated molecular pattern (PAMP)-triggered immunity (PTI) in N.benthamiana. Also interacts with the host receptor-like cytoplasmic kinase (RLCK) BIK1 and inhibits its kinase activity, thereby inhibiting PAMP-induced ROS generation. In PTI, phosphorylation relaying by RLKs and RLCKs is critical for the initiation of downstream signaling. The protein is Necrosis-inducing secreted protein 1 of Colletotrichum higginsianum (strain IMI 349063) (Crucifer anthracnose fungus).